Reading from the N-terminus, the 769-residue chain is Endothelin-converting enzyme 1 (769 aa).

At 1–67 (MRTVWSPLAA…WAARTSVEKR (67 aa)) the chain is on the cytoplasmic side. Thr-24 carries the post-translational modification Phosphothreonine. A helical; Signal-anchor for type II membrane protein transmembrane segment spans residues 68-88 (LVVLVTLLAAGLVACLAALGI). Residues 89-769 (QYQTRTPPVC…MNPHHKCEVW (681 aa)) lie on the Extracellular side of the membrane. Positions 97–769 (VCLTEACVSV…MNPHHKCEVW (673 aa)) constitute a Peptidase M13 domain. Disulfide bonds link Cys-98–Cys-103, Cys-121–Cys-754, Cys-129–Cys-714, Cys-184–Cys-434, and Cys-643–Cys-766. N-linked (GlcNAc...) asparagine glycosylation is found at Asn-165, Asn-186, Asn-209, Asn-269, Asn-315, Asn-361, Asn-382, and Asn-538. Position 606 (His-606) interacts with Zn(2+). The active site involves Glu-607. His-610 contributes to the Zn(2+) binding site. N-linked (GlcNAc...) asparagine glycans are attached at residues Asn-631 and Asn-650. Position 666 (Glu-666) interacts with Zn(2+). Asp-670 serves as the catalytic Proton donor.

It belongs to the peptidase M13 family. As to quaternary structure, homodimer; disulfide-linked. Interacts with PPP1R16B. Interacts with TSPAN8; this interaction recruits the endothelin converting enzyme ECE1 to tetraspanin-enriched microdomains and positively modulates its enzymatic activity. Requires Zn(2+) as cofactor.

It is found in the cell membrane. It catalyses the reaction Hydrolysis of the 21-Trp-|-Val-22 bond in big endothelin to form endothelin 1.. Inhibited by phosphoramidon. In terms of biological role, converts big endothelin-1 to endothelin-1. The polypeptide is Endothelin-converting enzyme 1 (Ece1) (Mus musculus (Mouse)).